The primary structure comprises 470 residues: Argininosuccinate lyase (470 aa).

It belongs to the lyase 1 family. Argininosuccinate lyase subfamily.

The protein localises to the cytoplasm. It carries out the reaction 2-(N(omega)-L-arginino)succinate = fumarate + L-arginine. It functions in the pathway amino-acid biosynthesis; L-arginine biosynthesis; L-arginine from L-ornithine and carbamoyl phosphate: step 3/3. This is Argininosuccinate lyase from Mycobacterium leprae (strain Br4923).